We begin with the raw amino-acid sequence, 454 residues long: MDKRIFGIETEFGISYSSPDSRPLAPEEVARYLFRKVVSWGRSSNVFLTNGSRLYLDVGSHPEYATAECDDLGQLIAHDRAGELILDDLVDEAQERLAAEGFNGTVYLFKNNTDSAGNSYGSHENYLIPRRGEFSRLAEILIPFLVTRQLIAGAGKILKTPHGATFAFSQRADHIWEGVSSATTRSRPIINTRDEPHADAEFYRRLHVIVGDSNMSETTALMKVGTVDLILRMIEAGVIMRDMRMENPIRSIREISHDLSGRALIRLANGRQLTALEIQREYLNKVTSFVAENGAHNQHVPLILDLWERTLTAIESGDTSTIDTEIDWAIKKKLMDSYRKRHGLGLDAPRIAQLDLTYHDISRTRGLYYLLQSRGAVRRVVDDTAVKDAVDAPPQTTRAKLRGDFVRRAQELGRDYTVDWVHLKLNDRAHQTILCKDPFRNVDERVDALLDSMG.

Residue Glu9 participates in Mg(2+) binding. ATP is bound at residue Arg53. Tyr55 is a Mg(2+) binding site. The active-site Proton acceptor is Asp57. Residue Glu63 participates in Mg(2+) binding. Thr66 and Trp420 together coordinate ATP.

Belongs to the Pup ligase/Pup deamidase family. Pup-conjugating enzyme subfamily.

The catalysed reaction is ATP + [prokaryotic ubiquitin-like protein]-L-glutamate + [protein]-L-lysine = ADP + phosphate + N(6)-([prokaryotic ubiquitin-like protein]-gamma-L-glutamyl)-[protein]-L-lysine.. It participates in protein degradation; proteasomal Pup-dependent pathway. The protein operates within protein modification; protein pupylation. In terms of biological role, catalyzes the covalent attachment of the prokaryotic ubiquitin-like protein modifier Pup to the proteasomal substrate proteins, thereby targeting them for proteasomal degradation. This tagging system is termed pupylation. The ligation reaction involves the side-chain carboxylate of the C-terminal glutamate of Pup and the side-chain amino group of a substrate lysine. This chain is Pup--protein ligase, found in Arthrobacter sp. (strain FB24).